A 171-amino-acid chain; its full sequence is MSRRNSYTWDELLQCARGEMFGPGNAQLPAPPMLMFDRITHIDSVGGAFDKGMIVAELDVKPELWFFDCHFISDPVMPGCLGLDAMWQMVGFYLGWIGGKGRGRALGVGEVKFRGQVLPHNRLVTYRINLKRVILRKLVMGIADAEMECDGKVIYEANDLRVGLFTSTDDF.

Histidine 70 is an active-site residue.

Belongs to the thioester dehydratase family. FabA subfamily. In terms of assembly, homodimer.

It localises to the cytoplasm. The enzyme catalyses a (3R)-hydroxyacyl-[ACP] = a (2E)-enoyl-[ACP] + H2O. It catalyses the reaction (3R)-hydroxydecanoyl-[ACP] = (2E)-decenoyl-[ACP] + H2O. It carries out the reaction (2E)-decenoyl-[ACP] = (3Z)-decenoyl-[ACP]. It participates in lipid metabolism; fatty acid biosynthesis. Necessary for the introduction of cis unsaturation into fatty acids. Catalyzes the dehydration of (3R)-3-hydroxydecanoyl-ACP to E-(2)-decenoyl-ACP and then its isomerization to Z-(3)-decenoyl-ACP. Can catalyze the dehydratase reaction for beta-hydroxyacyl-ACPs with saturated chain lengths up to 16:0, being most active on intermediate chain length. This is 3-hydroxydecanoyl-[acyl-carrier-protein] dehydratase from Methylococcus capsulatus (strain ATCC 33009 / NCIMB 11132 / Bath).